Reading from the N-terminus, the 526-residue chain is MLAKGLSLRSVLVKGCQPFLSPTWQGPVLSTGKGAGTSTSSPRSFNEIPSPGDNGWLNLYHFWRESGTQKIHYHQMQSFQKYGPIYREKLGTLESVYIVDPKDASILFSCEGPNPERFLVPPWVAYHQYYQRPIGVLFKSSDAWKKDRIVLNQEVMAPGAIKNFVPLLEGVAQDFIKVLHRRIKQQNSGNFSGVISDDLFRFSFESISSVIFGERMGMLEEIVDPEAQRFINAVYQMFHTSVPMLNLPPDFFRLLRTKTWKDHAAAWDVIFNKADEYTQNFYWDLRQKRDFSQYPGVLYSLLGGNKLPFKNIQANITEMLAGGVDTTSMTLQWNLYEMAHNLKVQEMLRAEVLAARRQAQGDMAKMVQLVPLLKASIKETLRLHPISVTLQRYTVNDLVLRNYKIPAKTLVQVASFAMGRDPGFFPNPNKFDPTRWLEKSQNTTHFRYLGFGWGVRQCLGRRIAELEMTILLINLLENFRIEVQNLRDVGTKFSLILMPENPILFNFQPLKQDLGPAVTRKDNTVN.

The N-terminal 36 residues, 1-36 (MLAKGLSLRSVLVKGCQPFLSPTWQGPVLSTGKGAG), are a transit peptide targeting the mitochondrion. A compositionally biased stretch (low complexity) spans 30–41 (STGKGAGTSTSS). The segment at 30–49 (STGKGAGTSTSSPRSFNEIP) is disordered. Residue C458 coordinates heme.

The protein belongs to the cytochrome P450 family. Interacts with FDX1/adrenodoxin. Requires heme as cofactor.

Its subcellular location is the mitochondrion inner membrane. It catalyses the reaction 6 reduced [adrenodoxin] + cholesterol + 3 O2 + 6 H(+) = 4-methylpentanal + pregnenolone + 6 oxidized [adrenodoxin] + 4 H2O. The enzyme catalyses 2 reduced [adrenodoxin] + cholesterol + O2 + 2 H(+) = (22R)-hydroxycholesterol + 2 oxidized [adrenodoxin] + H2O. It carries out the reaction (22R)-hydroxycholesterol + 2 reduced [adrenodoxin] + O2 + 2 H(+) = (20R,22R)-20,22-dihydroxycholesterol + 2 oxidized [adrenodoxin] + H2O. The catalysed reaction is (20R,22R)-20,22-dihydroxycholesterol + 2 reduced [adrenodoxin] + O2 + 2 H(+) = 4-methylpentanal + pregnenolone + 2 oxidized [adrenodoxin] + 2 H2O. The protein operates within lipid metabolism; C21-steroid hormone metabolism. It participates in steroid metabolism; cholesterol metabolism. A cytochrome P450 monooxygenase that catalyzes the side-chain hydroxylation and cleavage of cholesterol to pregnenolone, the precursor of most steroid hormones. Catalyzes three sequential oxidation reactions of cholesterol, namely the hydroxylation at C22 followed with the hydroxylation at C20 to yield 20R,22R-hydroxycholesterol that is further cleaved between C20 and C22 to yield the C21-steroid pregnenolone and 4-methylpentanal. Mechanistically, uses molecular oxygen inserting one oxygen atom into a substrate and reducing the second into a water molecule. Two electrons are provided by NADPH via a two-protein mitochondrial transfer system comprising flavoprotein FDXR (adrenodoxin/ferredoxin reductase) and nonheme iron-sulfur protein FDX1 or FDX2 (adrenodoxin/ferredoxin). The sequence is that of Cholesterol side-chain cleavage enzyme, mitochondrial from Mus musculus (Mouse).